We begin with the raw amino-acid sequence, 1106 residues long: Probable ATP-citrate synthase (1106 aa).

Citrate contacts are provided by N358, T360, and R391. The span at A442 to G459 shows a compositional bias: polar residues. The disordered stretch occupies residues A442 to L478. ATP-binding positions include V701–G721 and I752–A778. E718 is a binding site for Mg(2+). H760 serves as the catalytic Tele-phosphohistidine intermediate. L779 to S789 contacts CoA.

The protein in the N-terminal section; belongs to the succinate/malate CoA ligase beta subunit family. In the C-terminal section; belongs to the succinate/malate CoA ligase alpha subunit family. Homotetramer.

It is found in the cytoplasm. It carries out the reaction oxaloacetate + acetyl-CoA + ADP + phosphate = citrate + ATP + CoA. Catalyzes the cleavage of citrate into oxaloacetate and acetyl-CoA, the latter serving as common substrate in multiple biochemical reactions in protein, carbohydrate and lipid metabolism. This Caenorhabditis elegans protein is Probable ATP-citrate synthase.